A 333-amino-acid polypeptide reads, in one-letter code: Biotin synthase (333 aa).

The region spanning 40 to 269 (YRVQLASLLS…HARVRLSAGR (230 aa)) is the Radical SAM core domain. 3 residues coordinate [4Fe-4S] cluster: Cys-55, Cys-59, and Cys-62. [2Fe-2S] cluster-binding residues include Cys-100, Cys-132, Cys-192, and Arg-264.

It belongs to the radical SAM superfamily. Biotin synthase family. As to quaternary structure, homodimer. It depends on [4Fe-4S] cluster as a cofactor. Requires [2Fe-2S] cluster as cofactor.

It carries out the reaction (4R,5S)-dethiobiotin + (sulfur carrier)-SH + 2 reduced [2Fe-2S]-[ferredoxin] + 2 S-adenosyl-L-methionine = (sulfur carrier)-H + biotin + 2 5'-deoxyadenosine + 2 L-methionine + 2 oxidized [2Fe-2S]-[ferredoxin]. Its pathway is cofactor biosynthesis; biotin biosynthesis; biotin from 7,8-diaminononanoate: step 2/2. Catalyzes the conversion of dethiobiotin (DTB) to biotin by the insertion of a sulfur atom into dethiobiotin via a radical-based mechanism. The protein is Biotin synthase of Synechococcus sp. (strain CC9902).